A 221-amino-acid polypeptide reads, in one-letter code: Stromal cell-derived factor 2-like protein 1 (221 aa).

Residues 1–28 (MWSAGSGRAAGPALLGILLALSLSGGRA) form the signal peptide. MIR domains lie at 33 to 87 (AGLV…IRGG), 95 to 150 (GSPV…VRCS), and 151 to 205 (GQHW…AMEG). A Prevents secretion from ER motif is present at residues 218–221 (HDEL).

It localises to the endoplasmic reticulum lumen. This is Stromal cell-derived factor 2-like protein 1 (SDF2L1) from Bos taurus (Bovine).